Consider the following 115-residue polypeptide: Cobalt-zinc-cadmium resistance protein CzcI (115 aa).

A signal peptide spans 1–20 (MRRFVLIFVLLILPFQFSWA). The span at 93–102 (QHSSEFSSLN) shows a compositional bias: polar residues. The tract at residues 93 to 115 (QHSSEFSSLNARAPDRPQWQRLA) is disordered.

It is found in the periplasm. In terms of biological role, component of the czc cation-efflux system that confers resistance to cobalt, zinc and cadmium. May have a regulatory function. The chain is Cobalt-zinc-cadmium resistance protein CzcI (czcI) from Cupriavidus metallidurans (strain ATCC 43123 / DSM 2839 / NBRC 102507 / CH34) (Ralstonia metallidurans).